The following is a 410-amino-acid chain: Exopolygalacturonase (410 aa).

Positions 1-22 are cleaved as a signal peptide; that stretch reads MACIDNAMRALFLLALFCVVHG. 2 N-linked (GlcNAc...) asparagine glycosylation sites follow: Asn89 and Asn201. PbH1 repeat units lie at residues 192–218, 219–240, 242–262, 272–293, and 337–377; these read CKDMLIKDVNVTAPGDSPNTDGIHMGD, SSGVTITNTVIGVGDDCISIGP, TSKVNITGVTCGPGHGISIGS, VTDINVKDCTLKKTANGVRIKA, and ASKV…TMDD. Asp233 functions as the Proton donor in the catalytic mechanism. A disulfide bond links Cys235 and Cys252. Asn246 carries an N-linked (GlcNAc...) asparagine glycan. The active site involves His256. A glycan (N-linked (GlcNAc...) asparagine) is linked at Asn349. A disulfide bridge links Cys364 with Cys370. An N-linked (GlcNAc...) asparagine glycan is attached at Asn387. Cysteines 393 and 409 form a disulfide.

The protein belongs to the glycosyl hydrolase 28 family. In terms of tissue distribution, pollen.

The protein localises to the secreted. It is found in the cell wall. It carries out the reaction [(1-&gt;4)-alpha-D-galacturonosyl](n) + H2O = alpha-D-galacturonate + [(1-&gt;4)-alpha-D-galacturonosyl](n-1). In terms of biological role, may function in depolymerizing pectin during pollen development, germination, and tube growth. Acts as an exo-polygalacturonase. The chain is Exopolygalacturonase (PG2C) from Zea mays (Maize).